A 409-amino-acid polypeptide reads, in one-letter code: 5-aminolevulinate synthase (409 aa).

Arg21, Ser137, and Lys156 together coordinate substrate. Residues Ser189, His217, and Thr245 each coordinate pyridoxal 5'-phosphate. The active site involves Lys248. Lys248 carries the post-translational modification N6-(pyridoxal phosphate)lysine. Residues Thr277 and Thr278 each contribute to the pyridoxal 5'-phosphate site. Thr365 is a binding site for substrate.

This sequence belongs to the class-II pyridoxal-phosphate-dependent aminotransferase family. Homodimer. The cofactor is pyridoxal 5'-phosphate.

The catalysed reaction is succinyl-CoA + glycine + H(+) = 5-aminolevulinate + CO2 + CoA. Its pathway is porphyrin-containing compound metabolism; protoporphyrin-IX biosynthesis; 5-aminolevulinate from glycine: step 1/1. This Paracoccus denitrificans (strain Pd 1222) protein is 5-aminolevulinate synthase (hemA).